Consider the following 1260-residue polypeptide: Ankyrin repeat and sterile alpha motif domain-containing protein 1B (1260 aa).

ANK repeat units follow at residues 2 to 31 (GKDQ…GGIL), 58 to 87 (SGYT…STNV), 91 to 120 (KGYF…SHSR), 127 to 156 (ENET…DPTI), 160 to 189 (KLET…NLMS), 193 to 222 (RKHT…DVSC), and 225 to 254 (EKGS…DANI). The tract at residues 298-326 (HAQEDTAQETRLSSPAQSPSQKTKSETVT) is disordered. Polar residues predominate over residues 306 to 326 (ETRLSSPAQSPSQKTKSETVT). Ser310, Ser311, Ser315, Ser354, and Ser365 each carry phosphoserine. 3 disordered regions span residues 368-402 (ELGK…SCGP), 491-513 (PGTG…PSPD), and 556-642 (GCTS…EASL). Residues 372-385 (NGSQSVRTSSTINL) show a composition bias toward polar residues. Thr504 carries the phosphothreonine modification. Ser508 and Ser511 each carry phosphoserine. A compositionally biased stretch (low complexity) spans 556 to 575 (GCTSFTSSPPVSPPTSSVET). The span at 576–588 (TEIKNEGAEHTDD) shows a compositional bias: basic and acidic residues. Ser739 is subject to Phosphoserine. The segment at 754 to 778 (VNWSKSSTAERSSKDNSERTPSFTS) is disordered. Residue Thr773 is modified to Phosphothreonine. Ser775 bears the Phosphoserine mark. 2 SAM domains span residues 810 to 876 (CPVQ…LPKM) and 884 to 949 (YHPT…RLHE). Tyr901 is subject to Phosphotyrosine. The Nuclear localization signal motif lies at 935–938 (HRKR). Positions 946–989 (RLHEDPPQKPPRSITLREPSGNHTPPQLSPSLSQSTYTTGGSLD) are disordered. A compositionally biased stretch (low complexity) spans 969 to 984 (TPPQLSPSLSQSTYTT). Position 974 is a phosphoserine (Ser974). Tyr1007 is modified (phosphotyrosine). In terms of domain architecture, PID spans 1056-1213 (IFQSCDYKAF…SFENKPSKPI (158 aa)). Residues 1197–1217 (HSSTLPESFENKPSKPIPKPR) form a disordered region.

Interacts with EPHA8. Isoform 2 interacts with COIL. Isoform 3 interacts with DLG4. In terms of processing, nuclear translocation of isoform 3 requires an NMDAR-dependent proteolytic cleavage. A 35 kDa N-terminal form shuttles to the nucleus. In terms of tissue distribution, isoform 3 is brain specific and highly enriched in the postsynaptic densities (PSDs), especially in cortical, striatal and hippocampal PSDs.

It is found in the cytoplasm. The protein localises to the nucleus. The protein resides in the postsynaptic density. It localises to the cell projection. Its subcellular location is the dendritic spine. It is found in the cajal body. In terms of biological role, isoform 2 may participate in the regulation of nucleoplasmic coilin protein interactions in neuronal and transformed cells. Functionally, isoform 3 can regulate global protein synthesis by altering nucleolar numbers. This Rattus norvegicus (Rat) protein is Ankyrin repeat and sterile alpha motif domain-containing protein 1B (Anks1b).